Consider the following 126-residue polypeptide: Glycine cleavage system H protein (126 aa).

Residues 21–103 (TVTIGISEHA…YEGGWIVKVK (83 aa)) enclose the Lipoyl-binding domain. Residue K62 is modified to N6-lipoyllysine.

The protein belongs to the GcvH family. The glycine cleavage system is composed of four proteins: P, T, L and H. The cofactor is (R)-lipoate.

Functionally, the glycine cleavage system catalyzes the degradation of glycine. The H protein shuttles the methylamine group of glycine from the P protein to the T protein. The protein is Glycine cleavage system H protein of Vibrio parahaemolyticus serotype O3:K6 (strain RIMD 2210633).